The primary structure comprises 206 residues: Transmembrane emp24 domain-containing protein bai (206 aa).

The first 20 residues, 1-20 (MMKAILATLAIFGCIWPGQS), serve as a signal peptide directing secretion. At 21-172 (VMFHLTPNTQ…RDTNEKTNSR (152 aa)) the chain is on the lumenal side. The region spanning 30–140 (QKCLKEDIQA…LKPLEVDLKR (111 aa)) is the GOLD domain. A helical membrane pass occupies residues 173–193 (VLFFSIFSMCCLLGLATWQVL). At 194 to 206 (YLRRYFKAKKLIE) the chain is on the cytoplasmic side.

Belongs to the EMP24/GP25L family.

Its subcellular location is the membrane. Eca and bai are essential, though not redundant, for dorsoventral patterning of the embryo. Specifically required during early embryogenesis for the activity of maternal tkv, while the zygotic tkv is not affected. The protein is Transmembrane emp24 domain-containing protein bai of Drosophila willistoni (Fruit fly).